A 309-amino-acid chain; its full sequence is HPr kinase/phosphorylase (309 aa).

Residues His138 and Lys159 contribute to the active site. Position 153-160 (153-160 (GQSGVGKS)) interacts with ATP. Position 160 (Ser160) interacts with Mg(2+). Asp177 (proton acceptor; for phosphorylation activity. Proton donor; for dephosphorylation activity) is an active-site residue. The interval 201–210 (LEIRGLGIIN) is important for the catalytic mechanism of both phosphorylation and dephosphorylation. Glu202 is a binding site for Mg(2+). Residue Arg243 is part of the active site. Positions 264–269 (PVRPGR) are important for the catalytic mechanism of dephosphorylation.

Belongs to the HPrK/P family. Homohexamer. Mg(2+) serves as cofactor.

The catalysed reaction is [HPr protein]-L-serine + ATP = [HPr protein]-O-phospho-L-serine + ADP + H(+). The enzyme catalyses [HPr protein]-O-phospho-L-serine + phosphate + H(+) = [HPr protein]-L-serine + diphosphate. Functionally, catalyzes the ATP- as well as the pyrophosphate-dependent phosphorylation of a specific serine residue in HPr, a phosphocarrier protein of the phosphoenolpyruvate-dependent sugar phosphotransferase system (PTS). HprK/P also catalyzes the pyrophosphate-producing, inorganic phosphate-dependent dephosphorylation (phosphorolysis) of seryl-phosphorylated HPr (P-Ser-HPr). The two antagonistic activities of HprK/P are regulated by several intracellular metabolites, which change their concentration in response to the absence or presence of rapidly metabolisable carbon sources (glucose, fructose, etc.) in the growth medium. Also phosphorylates/dephosphorylates the HPr-like catabolite repression protein crh on a specific serine residue. Therefore, by controlling the phosphorylation state of HPr and crh, HPrK/P is a sensor enzyme that plays a major role in the regulation of carbon metabolism and sugar transport: it mediates carbon catabolite repression (CCR), and regulates PTS-catalyzed carbohydrate uptake and inducer exclusion. The chain is HPr kinase/phosphorylase from Bacillus cereus (strain G9842).